The chain runs to 206 residues: Putative NAD(P)H nitroreductase MhqN (206 aa).

Residues 11-13, 68-70, 157-158, arginine 193, and arginine 196 contribute to the FMN site; these read RRS, QYK, and IG.

The protein belongs to the nitroreductase family. In terms of assembly, homodimer. FMN serves as cofactor.

It is found in the cytoplasm. Putative nitroreductase that may contribute to the degradation of aromatic compounds. This chain is Putative NAD(P)H nitroreductase MhqN (mhqN), found in Bacillus subtilis (strain 168).